The sequence spans 210 residues: Ribosomal RNA large subunit methyltransferase E (210 aa).

S-adenosyl-L-methionine is bound by residues Gly67, Trp69, Asp87, Asp103, and Asp128. The Proton acceptor role is filled by Lys168.

The protein belongs to the class I-like SAM-binding methyltransferase superfamily. RNA methyltransferase RlmE family.

It is found in the cytoplasm. It catalyses the reaction uridine(2552) in 23S rRNA + S-adenosyl-L-methionine = 2'-O-methyluridine(2552) in 23S rRNA + S-adenosyl-L-homocysteine + H(+). Specifically methylates the uridine in position 2552 of 23S rRNA at the 2'-O position of the ribose in the fully assembled 50S ribosomal subunit. In Psychrobacter cryohalolentis (strain ATCC BAA-1226 / DSM 17306 / VKM B-2378 / K5), this protein is Ribosomal RNA large subunit methyltransferase E.